The primary structure comprises 457 residues: Gustatory and odorant receptor 24 (457 aa).

Residues 1-115 (MSLYFNADTM…GGTAFVLASP (115 aa)) lie on the Cytoplasmic side of the membrane. A helical transmembrane segment spans residues 116–136 (SMTYCVLFFLLLTVYIAFILL). Topologically, residues 137 to 152 (NRIEIVRTLEGRFEES) are extracellular. The chain crosses the membrane as a helical span at residues 153 to 173 (VIAYLFIVNILPILIIPLMWY). Over 174-209 (ESRKVVSVVNGWVDFETVYRETTGRALELRLRTKAQ) the chain is Cytoplasmic. A helical membrane pass occupies residues 210 to 230 (VIAILLPILCSLSVAITHVTM). Topologically, residues 231 to 237 (VDFKLLQ) are extracellular. A helical membrane pass occupies residues 238 to 258 (VIPYCVLDTITYMMGGYWYMA). Topologically, residues 259-309 (CETLSITAKILAEDFQRALRHVGPAAKVSEYRSLWLRLSKLARDTGFSTCY) are cytoplasmic. The chain crosses the membrane as a helical span at residues 310–330 (TFTFICLYLFFIITLSIYGLM). Topologically, residues 331–341 (SQISDGFGVKD) are extracellular. The helical transmembrane segment at 342-362 (IGLAVTAFCSVGLLFYICDEA) threads the bilayer. The Cytoplasmic portion of the chain corresponds to 363 to 421 (HYASFNVRTNFQKKLLMVELSWMNTDAQTEINMFLRATEMNPSSINLGGFFDVNRTLFK). Residues 422–442 (SLLATMVTYLVVLLQFQISIP) form a helical membrane-spanning segment. The Extracellular portion of the chain corresponds to 443–457 (DEPSAMLMHSNSSHS). An N-linked (GlcNAc...) asparagine glycan is attached at Asn-453.

Belongs to the insect chemoreceptor superfamily. Gustatory receptor (GR) family. Gr21a subfamily. Carbon dioxide-responsive neurons coexpress GPRgr22 and GPRgr24 in the maxillary palp, at both larval and adult life stages.

It localises to the cell membrane. In terms of biological role, gustatory receptor which mediates acceptance or avoidance behavior, depending on its substrates. GPRgr22 and GPRgr24 together are sufficient for olfactory carbon dioxide-chemosensation. The protein is Gustatory and odorant receptor 24 of Anopheles gambiae (African malaria mosquito).